Reading from the N-terminus, the 511-residue chain is Histidine ammonia-lyase (511 aa).

Positions 142 to 144 (ASG) form a cross-link, 5-imidazolinone (Ala-Gly). Position 143 is a 2,3-didehydroalanine (Ser) (Ser-143).

It belongs to the PAL/histidase family. Post-translationally, contains an active site 4-methylidene-imidazol-5-one (MIO), which is formed autocatalytically by cyclization and dehydration of residues Ala-Ser-Gly.

The protein localises to the cytoplasm. The enzyme catalyses L-histidine = trans-urocanate + NH4(+). It functions in the pathway amino-acid degradation; L-histidine degradation into L-glutamate; N-formimidoyl-L-glutamate from L-histidine: step 1/3. The polypeptide is Histidine ammonia-lyase (hutH) (Rhizobium meliloti (strain 1021) (Ensifer meliloti)).